Consider the following 403-residue polypeptide: Phosphoglycerate kinase (403 aa).

Residues 21–23 (DFN), arginine 36, 59–62 (HLGR), arginine 119, and arginine 154 contribute to the substrate site. Residues lysine 207, glycine 299, glutamate 330, and 357-360 (GGDA) contribute to the ATP site.

It belongs to the phosphoglycerate kinase family. In terms of assembly, monomer.

The protein resides in the cytoplasm. It catalyses the reaction (2R)-3-phosphoglycerate + ATP = (2R)-3-phospho-glyceroyl phosphate + ADP. It functions in the pathway carbohydrate degradation; glycolysis; pyruvate from D-glyceraldehyde 3-phosphate: step 2/5. The polypeptide is Phosphoglycerate kinase (Chlamydia trachomatis serovar L2 (strain ATCC VR-902B / DSM 19102 / 434/Bu)).